The following is a 604-amino-acid chain: MSVIQTPNGYKLDNSGRRVVVDPVTRIEGHMRCEVNVDSNNVIRNAVSTGTMWRGLEVILKGRDPRDAWAFVERICGVCTGCHALASVRAVENALDIRIPPNAHLIREIMAKVLQWHDHVVHFYHLHALDWVNPVNALKADPKATSELQQLVGPNHPMSSPGYFRDIQNRLKRFVESGELGIFKNGYWDNPAYKLSPEADLMATAHYLEALDIQKEIVKIHTIFGGKNPHPNFMVGGVPCAINMDGDLAAGAPLNMERLNFVRARIEEAYEFSKNVYIPDVIAIATFYKGWLYGGGLSATNVMDYGDYAKVNYDKSTDQLKGGAILNGNWNEVFPVDAADPEQIQEFVAHSWYKYPDEAKGLHPWDGVTEHNYALGPNTKGTRTDIKQLDEAAKYSWIKSPRWRGHAVEVGPLSRYILNYAQGNQYVIEQVDSSLAAFNKLAGTNLTPKQALPSTIGRTLARALEAHYCAAMMLDDWKELIGNIKAGDSSTANVEKWDPSTWPKEAKGYGLVAAPRGANGHWIRIKDGKIANYQCIVPTTWNGSPRDPAGNIGAFEASLMNTPMERPEEPVEILRTLHSFDPCLACSTHVMSEDGENLAKVTVR.

Residues C76, C79, C583, and C586 each coordinate Ni(2+).

Belongs to the [NiFe]/[NiFeSe] hydrogenase large subunit family. In terms of assembly, heterodimer of a large and a small subunit. It depends on Ni(2+) as a cofactor.

It is found in the cell membrane. It catalyses the reaction H2 + A = AH2. In terms of biological role, this enzyme recycles the H(2) produced by nitrogenase to increase the production of ATP and to protect nitrogenase against inhibition or damage by O(2) under carbon- or phosphate-limited conditions. The sequence is that of Uptake hydrogenase large subunit (hoxL) from Afipia carboxidovorans (strain ATCC 49405 / DSM 1227 / KCTC 32145 / OM5) (Oligotropha carboxidovorans).